Reading from the N-terminus, the 216-residue chain is U1 small nuclear ribonucleoprotein C (216 aa).

The segment at 4–36 (FFCDYCDVYLTHDSMSVRKAHNSGRNHLRNVVD) adopts a Matrin-type zinc-finger fold. 2 disordered regions span residues 70-89 (PQNQ…PGAG) and 125-216 (PGGI…ADKR). Pro residues-rich tracts occupy residues 140 to 149 (PPMPPFPGMP) and 157 to 204 (GVPP…PPFG).

This sequence belongs to the U1 small nuclear ribonucleoprotein C family. As to quaternary structure, U1 snRNP is composed of the 7 core Sm proteins B/B', D1, D2, D3, E, F and G that assemble in a heptameric protein ring on the Sm site of the small nuclear RNA to form the core snRNP, and at least 3 U1 snRNP-specific proteins U1-70K, U1-A and U1-C. U1-C interacts with U1 snRNA and the 5' splice-site region of the pre-mRNA.

Its subcellular location is the nucleus. Component of the spliceosomal U1 snRNP, which is essential for recognition of the pre-mRNA 5' splice-site and the subsequent assembly of the spliceosome. U1-C is directly involved in initial 5' splice-site recognition for both constitutive and regulated alternative splicing. The interaction with the 5' splice-site seems to precede base-pairing between the pre-mRNA and the U1 snRNA. Stimulates commitment or early (E) complex formation by stabilizing the base pairing of the 5' end of the U1 snRNA and the 5' splice-site region. The polypeptide is U1 small nuclear ribonucleoprotein C (Neurospora crassa (strain ATCC 24698 / 74-OR23-1A / CBS 708.71 / DSM 1257 / FGSC 987)).